The chain runs to 262 residues: 1,2-epoxyphenylacetyl-CoA isomerase (262 aa).

Belongs to the enoyl-CoA hydratase/isomerase family.

It carries out the reaction 2-(1,2-epoxy-1,2-dihydrophenyl)acetyl-CoA = 2-oxepin-2(3H)-ylideneacetyl-CoA. The protein operates within aromatic compound metabolism; phenylacetate degradation. In terms of biological role, catalyzes the reversible conversion of the epoxide to 2-oxepin-2(3H)-ylideneacetyl-CoA (oxepin-CoA). The chain is 1,2-epoxyphenylacetyl-CoA isomerase (paaG) from Escherichia coli (strain K12).